A 177-amino-acid chain; its full sequence is Peptide methionine sulfoxide reductase MsrA (177 aa).

Cysteine 15 is a catalytic residue.

Belongs to the MsrA Met sulfoxide reductase family.

The enzyme catalyses L-methionyl-[protein] + [thioredoxin]-disulfide + H2O = L-methionyl-(S)-S-oxide-[protein] + [thioredoxin]-dithiol. The catalysed reaction is [thioredoxin]-disulfide + L-methionine + H2O = L-methionine (S)-S-oxide + [thioredoxin]-dithiol. Its function is as follows. Has an important function as a repair enzyme for proteins that have been inactivated by oxidation. Catalyzes the reversible oxidation-reduction of methionine sulfoxide in proteins to methionine. The chain is Peptide methionine sulfoxide reductase MsrA from Listeria monocytogenes serotype 4a (strain HCC23).